Consider the following 290-residue polypeptide: Putative beta-lactamase HcpC (290 aa).

Residues 1-25 form the signal peptide; that stretch reads MLENVKKSLFRVLCLGALCLGGLMA. TPR repeat units follow at residues 29 to 62, 64 to 98, 100 to 133, 134 to 170, 172 to 205, 206 to 242, and 244 to 278; these read PKEL…KENS, CFNL…NYSN, CHLL…LKYA, EGCA…NDGD, CTIL…LKDS, PGCF…ENGG, and CFNL…GAKG. Intrachain disulfides connect Cys-56/Cys-64, Cys-92/Cys-100, Cys-128/Cys-136, Cys-164/Cys-172, Cys-200/Cys-208, Cys-236/Cys-244, and Cys-272/Cys-280.

The protein belongs to the hcp beta-lactamase family.

The protein localises to the secreted. The catalysed reaction is a beta-lactam + H2O = a substituted beta-amino acid. May hydrolyze 6-aminopenicillinic acid and 7-aminocephalosporanic acid (ACA) derivatives. The sequence is that of Putative beta-lactamase HcpC (hcpC) from Helicobacter pylori (strain J99 / ATCC 700824) (Campylobacter pylori J99).